Consider the following 354-residue polypeptide: Probable L-ascorbate-6-phosphate lactonase UlaG (354 aa).

It belongs to the UlaG family. A divalent metal cation serves as cofactor.

The protein localises to the cytoplasm. It catalyses the reaction L-ascorbate 6-phosphate + H2O = 3-dehydro-L-gulonate 6-phosphate. It participates in cofactor degradation; L-ascorbate degradation; D-xylulose 5-phosphate from L-ascorbate: step 1/4. Probably catalyzes the hydrolysis of L-ascorbate-6-P into 3-keto-L-gulonate-6-P. Is essential for L-ascorbate utilization under anaerobic conditions. The sequence is that of Probable L-ascorbate-6-phosphate lactonase UlaG from Salmonella agona (strain SL483).